An 810-amino-acid polypeptide reads, in one-letter code: Transitional endoplasmic reticulum ATPase homolog 2 (810 aa).

Residues 252–258 (PGTGKTL), Asn353, His389, and 526–531 (GCGKTL) each bind ATP. Basic and acidic residues predominate over residues 713–727 (RQEKERQDRSARGEE). Disordered regions lie at residues 713 to 732 (RQEKERQDRSARGEELMEDE) and 777 to 810 (FGNNFKFPGEAPSAGQPVGGNGGSGGNDDDDLYN). Gly residues predominate over residues 793 to 802 (PVGGNGGSGG). Positions 805 to 810 (DDDLYN) are interaction with ufd-2.

This sequence belongs to the AAA ATPase family. CDC48 subfamily. Homohexamer; oligomerization is ATP-independent. Forms a ring-shaped particle of 18.3 nm diameter, that displays 6-fold radial symmetry. Interacts with cdc-48.1 and thus may form heterohexamers. Forms a complex composed of ubxn-3, cdc-48.1 and/or cdc-48.2 and substrate cdt-1. Interacts (via N-terminus) with ubxn-3. Interacts (via N-terminus) with atx-3 (via RRDR motif). Interacts (via N-terminus) with ubxn-5. Interacts with ufd-1. Interacts (via DDDLYN motif) with ufd-2. Interacts (via N-terminus) with ubxn-1. Interacts (via N-terminus) with ubxn-2. Interacts (via N-terminus) with ubxn-4. Interacts with ubxn-6. Expressed in body wall muscles.

It localises to the cytoplasm. It carries out the reaction ATP + H2O = ADP + phosphate + H(+). Its activity is regulated as follows. The first ATP-binding region has low ATPase activity. The second ATP-binding region is responsible for ATPase activity. ATP binding to the first ATP-binding region induces intrinsic activity of the second ATP-binding region. While ATP binding to the first ATP-binding region appears to prevent ATP hydrolysis by the second ATP-binding region, ADP-binding to first region promotes the coordinate and cooperative ATPase cycle of the second ATP-binding region. ATP binding to the first ATP-binding region induces a conformational change, promoting the rotation of the first ATP-binding region relative to the second ATP-binding region in the hexamer. Inhibited by N-ethylmaleimide (NEM). In terms of biological role, ATP-dependent chaperone which probably uses the energy provided by ATP hydrolysis to generate mechanical force to unfold substrate proteins, disassemble protein complexes, and disaggregate protein aggregates. However, able to prevent aggregation of unfolded proteins also in an ATP-independent manner. Targets polyubiquitinated proteins for proteasomal degradation by binding to 'Lys-48'-linked polyubiquitin chains. Involved in the cytoplasmic elimination of misfolded proteins exported from the ER. This pathway, known as ERAD, prevents the activation of the unfolded protein response (UPR) caused by the accumulation of misfolded proteins in the ER. Together with udf-2 and chn-1, regulates myosin assembly in body wall muscles by targeting myosin chaperone unc-45 for proteasomal degradation. During oocyte meiosis and together with cdc-48.1, required for chromosome condensation at the diakinesis phase in prophase I and for progression of metaphase I. During the first embryonic cell division, regulates DNA replication and thus chromosome segregation and decondensation, and nuclear envelope re-assembly. In S phase and in association with ufd-1, npl-4.1 and/or npl-4.2 and ubxn-3, ensures the degradation of DNA licensing factor cdt-1 after the initiation of DNA replication and thus the disassembly of the DNA replication CMG helicase complex by promoting the dissociation from chromatin of several of its components including cdc-45 and sld-5. Regulates ubxn-3 nuclear localization during S phase. During the first embryonic cell divisions and together with cdc-48.1, regulates the re-assembly of the nuclear envelope after mitosis possibly by inactivating kinase air-2, a component of the chromosomal passenger complex (CPC). This Caenorhabditis elegans protein is Transitional endoplasmic reticulum ATPase homolog 2 (cdc-48.2).